Here is a 459-residue protein sequence, read N- to C-terminus: MKRLLALLATGVSIVGLTALAGPPAQAATGCKAEYTITSQWEGGFQAGVKITNLGDPVSGWTLGFTMPDAGQRLVQGWNATWSQSGSAVTAGGVDWNRTLATGASADLGFVGSFTGANPAPTSFTLNGATCSGSVTDPPTDPPTDPPATGTPAAVNGQLHVCGVHLCNQYDRPIQLRGMSTHGIQWFGPCYGDASLDRLAQDWKSDLLRVAMYVQEDGYETDPAGFTSRVNGLVDMAEDRGMYAVIDFHTLTPGDPNYNLDRARTFFSSVAARNDKKNVIYEIANEPNGVSWTAVKSYAEQVIPVIRAADPDAVVIVGTRGWSSLGVSDGANESEVVNNPVNATNIMYAFHFYAASHKDDYRAAVRPAATRLPLFVSEFGTVSATAWSVDRSSSVAWLDLLDQLKISYANWTYSDADEGSAAFRPGTCEGTDYSSSGVLTESGALVKSRISTTDDFPTS.

The first 27 residues, 1–27 (MKRLLALLATGVSIVGLTALAGPPAQA), serve as a signal peptide directing secretion. A CBM2 domain is found at 28–134 (ATGCKAEYTI…TLNGATCSGS (107 aa)). Cys31 and Cys131 form a disulfide bridge. Positions 129–151 (ATCSGSVTDPPTDPPTDPPATGT) are disordered. Residues 136–147 (TDPPTDPPTDPP) are linker ('hinge') (Pro-Thr box). Residues 148–357 (ATGTPAAVNG…YAFHFYAASH (210 aa)) form a catalytic region. The Proton donor role is filled by Glu286. Glu378 functions as the Nucleophile in the catalytic mechanism.

The protein belongs to the glycosyl hydrolase 5 (cellulase A) family. Post-translationally, the linker region (also termed 'hinge') may be a potential site for proteolysis.

It catalyses the reaction Endohydrolysis of (1-&gt;4)-beta-D-glucosidic linkages in cellulose, lichenin and cereal beta-D-glucans.. In Streptomyces lividans, this protein is Endoglucanase CelA (celA).